The sequence spans 101 residues: Small ribosomal subunit protein uS10 (101 aa).

The protein belongs to the universal ribosomal protein uS10 family. In terms of assembly, part of the 30S ribosomal subunit.

In terms of biological role, involved in the binding of tRNA to the ribosomes. The chain is Small ribosomal subunit protein uS10 from Mycobacterium avium (strain 104).